We begin with the raw amino-acid sequence, 332 residues long: Biotin synthase (332 aa).

The 230-residue stretch at 53 to 282 (HFGKKVKLNM…TKEIRISGGR (230 aa)) folds into the Radical SAM core domain. Cys-71, Cys-75, and Cys-78 together coordinate [4Fe-4S] cluster. [2Fe-2S] cluster is bound by residues Cys-115, Cys-147, Cys-207, and Arg-277.

This sequence belongs to the radical SAM superfamily. Biotin synthase family. In terms of assembly, homodimer. The cofactor is [4Fe-4S] cluster. [2Fe-2S] cluster serves as cofactor.

It catalyses the reaction (4R,5S)-dethiobiotin + (sulfur carrier)-SH + 2 reduced [2Fe-2S]-[ferredoxin] + 2 S-adenosyl-L-methionine = (sulfur carrier)-H + biotin + 2 5'-deoxyadenosine + 2 L-methionine + 2 oxidized [2Fe-2S]-[ferredoxin]. Its pathway is cofactor biosynthesis; biotin biosynthesis; biotin from 7,8-diaminononanoate: step 2/2. Functionally, catalyzes the conversion of dethiobiotin (DTB) to biotin by the insertion of a sulfur atom into dethiobiotin via a radical-based mechanism. The polypeptide is Biotin synthase (Bacillus mycoides (strain KBAB4) (Bacillus weihenstephanensis)).